Reading from the N-terminus, the 261-residue chain is tRNA pseudouridine synthase A (261 aa).

The Nucleophile role is filled by D51. A substrate-binding site is contributed by Y109.

The protein belongs to the tRNA pseudouridine synthase TruA family. Homodimer.

It catalyses the reaction uridine(38/39/40) in tRNA = pseudouridine(38/39/40) in tRNA. In terms of biological role, formation of pseudouridine at positions 38, 39 and 40 in the anticodon stem and loop of transfer RNAs. The sequence is that of tRNA pseudouridine synthase A from Shewanella piezotolerans (strain WP3 / JCM 13877).